The following is a 407-amino-acid chain: Fructose-1,6-bisphosphatase, chloroplastic (407 aa).

The transit peptide at 1–50 (MAAATASSQLIFSKPYSPSRLCPFQLCVFDAKSVLSSSRRKHVNGSGVRC) directs the protein to the chloroplast. Residues E126, E155, D176, L178, and D179 each contribute to the Mg(2+) site. Position 179 to 182 (179 to 182 (DGSS)) interacts with substrate. C203 and C223 are disulfide-bonded. N287, Y319, Y337, Y339, and K349 together coordinate substrate. E355 lines the Mg(2+) pocket.

This sequence belongs to the FBPase class 1 family. As to quaternary structure, homotetramer. Mg(2+) is required as a cofactor.

Its subcellular location is the plastid. The protein resides in the chloroplast stroma. It carries out the reaction beta-D-fructose 1,6-bisphosphate + H2O = beta-D-fructose 6-phosphate + phosphate. Its pathway is carbohydrate biosynthesis; Calvin cycle. The protein is Fructose-1,6-bisphosphatase, chloroplastic (FBP) of Pisum sativum (Garden pea).